Consider the following 321-residue polypeptide: Olfactory receptor 52P1 (321 aa).

Residues 1–27 (MESPNHTDVDPSVFFLLGIPGLEQFHL) lie on the Extracellular side of the membrane. The N-linked (GlcNAc...) asparagine glycan is linked to N5. A helical membrane pass occupies residues 28–48 (WLSLPVCGLGTATIVGNITIL). Residues 49-56 (VVVATEPV) lie on the Cytoplasmic side of the membrane. Residues 57–77 (LHKPVYLFLCMLSTIDLAASV) traverse the membrane as a helical segment. The Extracellular portion of the chain corresponds to 78-101 (STVPKLLAIFWCGAGHISASACLA). A disulfide bridge connects residues C99 and C191. Residues 102–122 (QMFFIHAFCMMESTVLLAMAF) traverse the membrane as a helical segment. The Cytoplasmic segment spans residues 123–141 (DRYVAICHPLRYATILTDT). Residues 142–162 (IIAHIGVAAVVRGSLLMLPCP) form a helical membrane-spanning segment. Over 163 to 198 (FLIGRLNFCQSHVILHTYCEHMAVVKLACGDTRPNR) the chain is Extracellular. Residues 199-219 (VYGLTAALLVIGVDLFCIGLS) traverse the membrane as a helical segment. At 220–239 (YALSAQAVLRLSSHEARSKA) the chain is on the cytoplasmic side. The chain crosses the membrane as a helical span at residues 240–260 (LGTCGSHVCVILISYTPALFS). Over 261 to 275 (FFTHRFGHHVPVHIH) the chain is Extracellular. The helical transmembrane segment at 276–296 (ILLANVYLLLPPALNPVVYGV) threads the bilayer. Topologically, residues 297-315 (KTKQIRKRVVRVFQSGQGM) are cytoplasmic.

It belongs to the G-protein coupled receptor 1 family.

The protein resides in the cell membrane. Functionally, odorant receptor. This is Olfactory receptor 52P1 from Homo sapiens (Human).